The sequence spans 533 residues: Probable ADP-ribosylation factor-binding protein C25H2.16c (533 aa).

The region spanning 15 to 151 is the VHS domain; sequence ATEPYAFEPD…LLSYKGYTFP (137 aa). One can recognise a GAT domain in the interval 178-305; it reads REAMSAKLQE…LLTQYDHLLE (128 aa). Serine 320 carries the phosphoserine modification. A GAE domain is found at 417 to 532; that stretch reads NNFTSTCAFE…EYTGQSSIRL (116 aa).

It belongs to the GGA protein family.

It localises to the golgi apparatus. The protein localises to the trans-Golgi network. Its function is as follows. May play a role in the regulation of membrane traffic through the trans-Golgi network. This Schizosaccharomyces pombe (strain 972 / ATCC 24843) (Fission yeast) protein is Probable ADP-ribosylation factor-binding protein C25H2.16c.